The sequence spans 199 residues: Superoxide dismutase [Mn/Fe] (199 aa).

Fe(3+) contacts are provided by H27, H81, D161, and H165. Mn(2+) is bound by residues H27, H81, D161, and H165.

It belongs to the iron/manganese superoxide dismutase family. Homodimer. Requires Mn(2+) as cofactor. Fe(3+) serves as cofactor.

It carries out the reaction 2 superoxide + 2 H(+) = H2O2 + O2. In terms of biological role, destroys superoxide anion radicals which are normally produced within the cells and which are toxic to biological systems. Catalyzes the dismutation of superoxide anion radicals into O2 and H2O2 by successive reduction and oxidation of the transition metal ion at the active site. Also contributes to the inhibition of lipid oxidation. Manganese-preferring enzyme, less active with iron than with manganese. This chain is Superoxide dismutase [Mn/Fe] (sodA), found in Staphylococcus xylosus.